The following is a 123-amino-acid chain: Large ribosomal subunit protein bL20 (123 aa).

A compositionally biased stretch (basic residues) spans 1-15; the sequence is MARVKRSVNAKKKRR. A disordered region spans residues 1 to 23; that stretch reads MARVKRSVNAKKKRREVLDQASG.

It belongs to the bacterial ribosomal protein bL20 family.

Binds directly to 23S ribosomal RNA and is necessary for the in vitro assembly process of the 50S ribosomal subunit. It is not involved in the protein synthesizing functions of that subunit. This chain is Large ribosomal subunit protein bL20, found in Cutibacterium acnes (strain DSM 16379 / KPA171202) (Propionibacterium acnes).